Here is a 315-residue protein sequence, read N- to C-terminus: MSQSLRIVFAGTPDFAARHLAALLSSEHEVIAVYTNPDRPAGRGKKLAAPPVKQLALEHNIPVYQPESFKSDEAKQELADLNADLMVVVAYGMLLPQAVLDTPKLGCINVHGSILPRWRGAAPIQRSIWAGDAETGVTIMQMDIGLDTGDMLKIATLPIEATDTSASMYEKLAELGPEALIDCLADIAAGKAVPVKQDDELANYAKKLNKEEARINWNDDAAHIERCVRAFNPWPMSHFEAAENSIKVWQSRVAEQTSDKPAGTIVQADKTGIYVATGNGVLVLEQLQVPGKKAMSVQDILNSRAAWFEVGTLLV.

Residue 113–116 (SILP) coordinates (6S)-5,6,7,8-tetrahydrofolate.

This sequence belongs to the Fmt family.

It carries out the reaction L-methionyl-tRNA(fMet) + (6R)-10-formyltetrahydrofolate = N-formyl-L-methionyl-tRNA(fMet) + (6S)-5,6,7,8-tetrahydrofolate + H(+). Functionally, attaches a formyl group to the free amino group of methionyl-tRNA(fMet). The formyl group appears to play a dual role in the initiator identity of N-formylmethionyl-tRNA by promoting its recognition by IF2 and preventing the misappropriation of this tRNA by the elongation apparatus. This chain is Methionyl-tRNA formyltransferase, found in Vibrio parahaemolyticus serotype O3:K6 (strain RIMD 2210633).